The chain runs to 419 residues: NF-kappa-B essential modulator (419 aa).

Positions 1-197 are required for interaction with and ubiquitination by MARCHF2; the sequence is MNRHLWKSQL…REALQQQHSV (197 aa). 2 positions are modified to phosphoserine; by IKKB: Ser31 and Ser43. Positions 44-111 are interaction with CHUK/IKBKB; that stretch reads EQGAPETLQR…KLVERLGLEK (68 aa). A coiled-coil region spans residues 49–356; the sequence is ETLQRCLEEN…CQESARIEDM (308 aa). Ser68 carries the post-translational modification Phosphoserine. Ser85 is modified (phosphoserine; by ATM). Glycyl lysine isopeptide (Lys-Gly) (interchain with G-Cter in ubiquitin) cross-links involve residues Lys111, Lys139, Lys143, Lys226, Lys246, and Lys264. The segment at 150–257 is interaction with TANK; sequence LGELQESQSR…SVVGSERKRG (108 aa). The segment at 242–350 is ubiquitin-binding (UBAN); the sequence is DNHIKSSVVG…SKLKASCQES (109 aa). The interval 246-365 is self-association; it reads KSSVVGSERK…MRKRHVEVSQ (120 aa). Residues 251–419 form a required for interaction with TNFAIP3 region; that stretch reads GSERKRGMQL…LQIHVMECIE (169 aa). Residue Lys277 forms a Glycyl lysine isopeptide (Lys-Gly) (interchain with G-Cter in SUMO); alternate linkage. Lys277 is covalently cross-linked (Glycyl lysine isopeptide (Lys-Gly) (interchain with G-Cter in ubiquitin); alternate). Glycyl lysine isopeptide (Lys-Gly) (interchain with G-Cter in ubiquitin) cross-links involve residues Lys283, Lys285, Lys292, and Lys302. Residue Lys309 forms a Glycyl lysine isopeptide (Lys-Gly) (interchain with G-Cter in SUMO); alternate linkage. Lys309 is covalently cross-linked (Glycyl lysine isopeptide (Lys-Gly) (interchain with G-Cter in ubiquitin); alternate). Residues Lys321 and Lys325 each participate in a glycyl lysine isopeptide (Lys-Gly) (interchain with G-Cter in ubiquitin) cross-link. The tract at residues 322-343 is leucine-zipper; sequence LAEKKELLQEQLEQLQREYSKL. Lys326 is covalently cross-linked (Glycyl lysine isopeptide (Lys-Gly) (interchain with G-Cter in ubiquitin and interchain with MARCHF2)). The disordered stretch occupies residues 358-395; that stretch reads KRHVEVSQAPLPPAPAYLSSPLALPSQRRSPPEEPPDF. Residues 373–386 are compositionally biased toward low complexity; the sequence is AYLSSPLALPSQRR. Phosphoserine; by IKKB is present on Ser376. Residues 382 to 419 form an interaction with CYLD region; it reads PSQRRSPPEEPPDFCCPKCQYQAPDMDTLQIHVMECIE. Ser387 is modified (phosphoserine). The segment at 389–419 adopts a CCHC NOA-type zinc-finger fold; that stretch reads PEEPPDFCCPKCQYQAPDMDTLQIHVMECIE. Cys397 is a binding site for Zn(2+). A Glycyl lysine isopeptide (Lys-Gly) (interchain with G-Cter in ubiquitin) cross-link involves residue Lys399. Cys400, His413, and Cys417 together coordinate Zn(2+).

As to quaternary structure, homodimer; disulfide-linked. Component of the I-kappa-B-kinase (IKK) core complex consisting of CHUK, IKBKB and IKBKG; probably four alpha/CHUK-beta/IKBKB dimers are associated with four gamma/IKBKG subunits. The IKK core complex seems to associate with regulatory or adapter proteins to form a IKK-signalosome holo-complex. The IKK complex associates with TERF2IP/RAP1, leading to promote IKK-mediated phosphorylation of RELA/p65. Part of a complex composed of NCOA2, NCOA3, CHUK/IKKA, IKBKB, IKBKG and CREBBP. Interacts with COPS3, CYLD, NALP2, TRPC4AP and PIDD1. Interacts with ATM; the complex is exported from the nucleus. Interacts with TRAF6. Interacts with IKBKE. Interacts with TANK; the interaction is enhanced by IKBKE and TBK1. Part of a ternary complex consisting of TANK, IKBKB and IKBKG. Interacts with ZFAND5. Interacts with RIPK2. Interacts with TNIP1 and TNFAIP3; TNIP1 facilitates the TNFAIP3-mediated de-ubiquitination of IKBKG. Interacts with TNFAIP3; the interaction is induced by TNF stimulation and by polyubiquitin. Binds (via UBAN region) polyubiquitin; binds both 'Lys-63'-linked and linear polyubiquitin, with higher affinity for linear ubiquitin. Interacts with NLRP10. Interacts with TANK; this interaction increases in response to DNA damage. Interacts with USP10; this interaction increases in response to DNA damage. Interacts with ZC3H12A; this interaction increases in response to DNA damage. Interacts with IFIT5; the interaction synergizes the recruitment of IKK to MAP3K7 and enhances IKK phosphorylation. Interacts with TRIM29; this interaction induces IKBKG/NEMO ubiquitination and proteolytic degradation. Interacts with TRIM13; this interaction leads to IKBKG/NEMO ubiquitination. Interacts with ARFIP2. Interacts with RIPK1. Interacts with (ubiquitinated) BCL10; interaction with polyubiquitinated BCL10 via both 'Lys-63'-linked and linear ubiquitin is required for TCR-induced NF-kappa-B activation. Interacts with MARCHF2; during the late stages of macrophage viral and bacterial infection; the interaction leads to ubiquitination and degradation of IKBKG/NEMO. (Microbial infection) Interacts with Molluscum contagiosum virus protein MC005; this interaction inhibits NF-kappa-B activation. In terms of assembly, (Microbial infection) Interacts with HTLV-1 Tax oncoprotein; the interaction activates IKBKG. As to quaternary structure, (Microbial infection) Interacts with Shigella flexneri ipah9.8; the interaction promotes TNIP1-dependent 'Lys-27'-linked polyubiquitination of IKBKG which perturbs NF-kappa-B activation during bacterial infection. (Microbial infection) Interacts with SARS coronavirus-2/SARS-CoV-2 virus protein ORF9B (via N-terminus); the interaction inhibits polyubiquitination through 'Lys-63' and NF-kappa-B activation. Phosphorylation at Ser-68 attenuates aminoterminal homodimerization. Post-translationally, polyubiquitinated on Lys-285 via 'Lys-63'-linked ubiquitin; the ubiquitination is mediated downstream of NOD2 and RIPK2 and probably plays a role in signaling by facilitating interactions with ubiquitin domain-containing proteins and activates the NF-kappa-B pathway. Polyubiquitinated on Lys-285 and Lys-399 through 'Lys-63'-linked ubiquitin; the ubiquitination is mediated by BCL10, MALT1 and TRAF6 and probably plays a role in signaling by facilitating interactions with ubiquitin domain-containing proteins and activates the NF-kappa-B pathway. Monoubiquitinated on Lys-277 and Lys-309; promotes nuclear export. Polyubiquitinated through 'Lys-27' by TRIM23; involved in antiviral innate and inflammatory responses. Linear polyubiquitinated on Lys-111, Lys-143, Lys-226, Lys-246, Lys-264, Lys-277, Lys-285, Lys-292, Lys-302, Lys-309 and Lys-326; the head-to-tail polyubiquitination is mediated by the LUBAC complex and plays a key role in NF-kappa-B activation. Deubiquitinated by USP10 in a TANK-dependent and -independent manner, leading to the negative regulation of NF-kappa-B signaling upon DNA damage. Ubiquitinated at Lys-326 by MARCHF2 following bacterial and viral infection which leads to its degradation. Polyubiquitinated via 'Lys-29'-linked ubiquitin; leading to lysosomal degradation. In terms of processing, sumoylated on Lys-277 and Lys-309 with SUMO1; the modification results in phosphorylation of Ser-85 by ATM leading to a replacement of the sumoylation by mono-ubiquitination on these residues. Neddylated by TRIM40, resulting in stabilization of NFKBIA and down-regulation of NF-kappa-B activity. Post-translationally, (Microbial infection) Cleaved by hepatitis A virus (HAV) protease 3C allowing the virus to disrupt the host innate immune signaling. In terms of processing, (Microbial infection) Deubiquitinated by Epstein-Barr virus BPLF1 on both 'Lys-48' and 'Lys-63'-linked ubiquitin chains; leading to NF-kappa-B signaling inhibition. (Microbial infection) Polyubiquitinated on Lys-309 and Lys-321 via 'Lys-27'-linked ubiquitin by Shigella flexneri E3 ubiquitin-protein ligase ipah9.8, leading to its degradation by the proteasome. Post-translationally, (Microbial infection) Polyubiquitination through 'Lys-63' is interrupted by interaction with SARS coronavirus-2/SARS-CoV-2 virus protein ORF9B which inhibits the NF-kappa-B pathway. In terms of tissue distribution, heart, brain, placenta, lung, liver, skeletal muscle, kidney and pancreas.

The protein localises to the cytoplasm. Its subcellular location is the nucleus. Functionally, regulatory subunit of the IKK core complex which phosphorylates inhibitors of NF-kappa-B thus leading to the dissociation of the inhibitor/NF-kappa-B complex and ultimately the degradation of the inhibitor. Its binding to scaffolding polyubiquitin plays a key role in IKK activation by multiple signaling receptor pathways. Can recognize and bind both 'Lys-63'-linked and linear polyubiquitin upon cell stimulation, with a much higher affinity for linear polyubiquitin. Could be implicated in NF-kappa-B-mediated protection from cytokine toxicity. Essential for viral activation of IRF3. Involved in TLR3- and IFIH1-mediated antiviral innate response; this function requires 'Lys-27'-linked polyubiquitination. (Microbial infection) Also considered to be a mediator for HTLV-1 Tax oncoprotein activation of NF-kappa-B. The polypeptide is NF-kappa-B essential modulator (Homo sapiens (Human)).